Reading from the N-terminus, the 324-residue chain is Adipolin (324 aa).

The signal sequence occupies residues 1–24; the sequence is MRCWVWLLVAIVLCQQLSVVRVLA. 2 disordered regions span residues 28 to 66 and 83 to 121; these read ERKK…DPGL and GANS…MPGA. The span at 40-49 shows a compositional bias: polar residues; sequence EPFNVSLSNS. The N-linked (GlcNAc...) asparagine glycan is linked to Asn43. Positions 50 to 60 are enriched in basic and acidic residues; sequence EELHETDKLSE. The span at 86 to 98 shows a compositional bias: basic residues; the sequence is SKKKCKGKDKKLR. Residues 103–118 are compositionally biased toward pro residues; sequence PPGPPGPQGPPGPPGM. The C1q domain maps to 169–324; that stretch reads YRRVDEGFHC…SDFMGILMGL (156 aa).

This sequence belongs to the adipolin/erythroferrone family. As to quaternary structure, homomultimer; disulfide-linked.

Its subcellular location is the secreted. Functionally, insulin-sensitizing adipocyte-secreted protein (adipokine) that regulates glucose metabolism in liver and adipose tissue. This Xenopus tropicalis (Western clawed frog) protein is Adipolin (c1qtnf12).